Consider the following 636-residue polypeptide: Polyadenylate-binding protein 1 (636 aa).

Position 1 is an N-acetylmethionine (Met-1). RRM domains are found at residues 11–89 (ASLY…WSQR), 99–175 (GNIF…RFKS), 191–268 (TNVY…RAQK), and 294–370 (VNLY…LAQR). Residues 166–289 (RKVFVGRFKS…FEQMKQDRIT (124 aa)) form a CSDE1-binding region. Position 299 is an N6-methyllysine (Lys-299). At Ser-315 the chain carries Phosphoserine. Phosphothreonine is present on Thr-319. Omega-N-methylarginine occurs at positions 385, 419, 432, and 436. 2 positions are modified to omega-N-methylated arginine; by CARM1: Arg-455 and Arg-460. Omega-N-methylarginine occurs at positions 475 and 481. Arg-493 is modified (asymmetric dimethylarginine; alternate). Arg-493 carries the post-translational modification Dimethylated arginine; alternate. Omega-N-methylarginine; alternate is present on Arg-493. Omega-N-methylarginine is present on Arg-506. Lys-512 bears the N6-acetyllysine mark. Arg-518 is modified (omega-N-methylarginine). The 78-residue stretch at 542–619 (QEPLTASMLA…AVAVLQAHQA (78 aa)) folds into the PABC domain.

Belongs to the polyadenylate-binding protein type-1 family. May form homodimers. Component of a multisubunit autoregulatory ribonucleoprotein complex (ARC), at least composed of IGF2BP1, PABPC1 and CSDE1. Directly interacts with IGF2BP1. Part of a complex associated with the FOS mCRD domain and consisting of HNRPD, SYNCRIP, PAIP1 and CSDE1/UNR. Interacts with PAIP1 and PAIP2 (via the PABPC1-interacting motifs PAM1 and PAM2). Interacts with PAIP1 with a 1:1 stoichiometry and with PAIP2 with a 1:2 stoichiometry. The interaction with CSDE1 is direct and RNA-independent. Found in a mRNP complex with YBX2. Interacts with TENT2/GLD2. Identified in the spliceosome C complex. Identified in a mRNP complex, at least composed of DHX9, DDX3X, ELAVL1, HNRNPU, IGF2BP1, ILF3, PABPC1, PCBP2, PTBP2, STAU1, STAU2, SYNCRIP and YBX1. The interaction with DDX3X is direct and RNA-independent. This interaction increases in stressed cells and decreases during cell recovery. Identified in a IGF2BP1-dependent mRNP granule complex containing untranslated mRNAs. Interacts with NXF1/TAP. Interacts with PIWIL1. Interacts with AGO1, AGO2, GSPT1 and GSPT2. Interacts with LARP4B. Interacts (via the second and third RRM domains and the C-terminus) with PAIP2B (via central acidic portion and C-terminus). Forms a complex with LARP1 and SHFL. Interacts with LARP4. Interacts with ZFC3H1 in a RNase-sensitive manner. Interacts with TRIM71 (via NHL repeats) in an RNA-dependent manner. Interacts with TENT5C; the interaction has no effect on TENT5C poly(A) polymerase function. Interacts with G3BP1 and G3BP2. Interacts with ENDOV; the interaction is RNA-dependent and stimulates ENDOV activity. Interacts with UPF1; the interaction is RNA-dependent. Interacts with IGF2BP2 and IGF2BP3. May interact with SETX. Interacts with RBM46. Interacts with PAN3. Post-translationally, phosphorylated by MAPKAPK2. Methylated by CARM1. Arg-493 is dimethylated, probably to asymmetric dimethylarginine.

It is found in the cytoplasm. The protein localises to the stress granule. The protein resides in the nucleus. It localises to the cell projection. Its subcellular location is the lamellipodium. Binds the poly(A) tail of mRNA, including that of its own transcript, and regulates processes of mRNA metabolism such as pre-mRNA splicing and mRNA stability. Its function in translational initiation regulation can either be enhanced by PAIP1 or repressed by PAIP2. Can probably bind to cytoplasmic RNA sequences other than poly(A) in vivo. Binds to N6-methyladenosine (m6A)-containing mRNAs and contributes to MYC stability by binding to m6A-containing MYC mRNAs. Involved in translationally coupled mRNA turnover. Implicated with other RNA-binding proteins in the cytoplasmic deadenylation/translational and decay interplay of the FOS mRNA mediated by the major coding-region determinant of instability (mCRD) domain. Involved in regulation of nonsense-mediated decay (NMD) of mRNAs containing premature stop codons; for the recognition of premature termination codons (PTC) and initiation of NMD a competitive interaction between UPF1 and PABPC1 with the ribosome-bound release factors is proposed. By binding to long poly(A) tails, may protect them from uridylation by ZCCHC6/ZCCHC11 and hence contribute to mRNA stability. This chain is Polyadenylate-binding protein 1 (PABPC1), found in Pongo abelii (Sumatran orangutan).